The sequence spans 362 residues: Protein-glutamate methylesterase/protein-glutamine glutaminase (362 aa).

The Response regulatory domain maps to 5–122; sequence KVLCVDDSAL…RDGMLDYSEK (118 aa). D56 is subject to 4-aspartylphosphate. The region spanning 163 to 355 is the CheB-type methylesterase domain; sequence LLSTEKLIIV…RRVMARLSSM (193 aa). Residues S175, H201, and D297 contribute to the active site.

This sequence belongs to the CheB family. Post-translationally, phosphorylated by CheA. Phosphorylation of the N-terminal regulatory domain activates the methylesterase activity.

It is found in the cytoplasm. The enzyme catalyses [protein]-L-glutamate 5-O-methyl ester + H2O = L-glutamyl-[protein] + methanol + H(+). It catalyses the reaction L-glutaminyl-[protein] + H2O = L-glutamyl-[protein] + NH4(+). Involved in chemotaxis. Part of a chemotaxis signal transduction system that modulates chemotaxis in response to various stimuli. Catalyzes the demethylation of specific methylglutamate residues introduced into the chemoreceptors (methyl-accepting chemotaxis proteins or MCP) by CheR. Also mediates the irreversible deamidation of specific glutamine residues to glutamic acid. This chain is Protein-glutamate methylesterase/protein-glutamine glutaminase, found in Paraburkholderia xenovorans (strain LB400).